We begin with the raw amino-acid sequence, 502 residues long: Exodeoxyribonuclease 7 large subunit (502 aa).

Over residues 474 to 495 (SAPSTTKKSAPKPAAPKAPKTP) the composition is skewed to low complexity. The disordered stretch occupies residues 474–502 (SAPSTTKKSAPKPAAPKAPKTPGEQGSLF).

Belongs to the XseA family. Heterooligomer composed of large and small subunits.

Its subcellular location is the cytoplasm. The catalysed reaction is Exonucleolytic cleavage in either 5'- to 3'- or 3'- to 5'-direction to yield nucleoside 5'-phosphates.. Its function is as follows. Bidirectionally degrades single-stranded DNA into large acid-insoluble oligonucleotides, which are then degraded further into small acid-soluble oligonucleotides. This chain is Exodeoxyribonuclease 7 large subunit, found in Ruegeria sp. (strain TM1040) (Silicibacter sp.).